The sequence spans 436 residues: Methylenetetrahydrofolate--tRNA-(uracil-5-)-methyltransferase TrmFO (436 aa).

9-14 contacts FAD; it reads GAGLAG.

Belongs to the MnmG family. TrmFO subfamily. It depends on FAD as a cofactor.

The protein resides in the cytoplasm. It catalyses the reaction uridine(54) in tRNA + (6R)-5,10-methylene-5,6,7,8-tetrahydrofolate + NADH + H(+) = 5-methyluridine(54) in tRNA + (6S)-5,6,7,8-tetrahydrofolate + NAD(+). The enzyme catalyses uridine(54) in tRNA + (6R)-5,10-methylene-5,6,7,8-tetrahydrofolate + NADPH + H(+) = 5-methyluridine(54) in tRNA + (6S)-5,6,7,8-tetrahydrofolate + NADP(+). Catalyzes the folate-dependent formation of 5-methyl-uridine at position 54 (M-5-U54) in all tRNAs. In Ligilactobacillus salivarius (strain UCC118) (Lactobacillus salivarius), this protein is Methylenetetrahydrofolate--tRNA-(uracil-5-)-methyltransferase TrmFO.